Here is a 160-residue protein sequence, read N- to C-terminus: Transcriptional repressor NrdR (160 aa).

The segment at 3–34 (CPYCQYEDTQVKDSRPSEEGTVIRRRRICSVC) is a zinc-finger region. The 91-residue stretch at 49-139 (LLVLKKSGRY…VYRDFRNASD (91 aa)) folds into the ATP-cone domain.

This sequence belongs to the NrdR family. Requires Zn(2+) as cofactor.

In terms of biological role, negatively regulates transcription of bacterial ribonucleotide reductase nrd genes and operons by binding to NrdR-boxes. This chain is Transcriptional repressor NrdR, found in Bartonella henselae (strain ATCC 49882 / DSM 28221 / CCUG 30454 / Houston 1) (Rochalimaea henselae).